Reading from the N-terminus, the 126-residue chain is uncharacterized protein (126 aa).

A VOC domain is found at 4–126 (RIDHTGIMVR…DGEWIEFFQR (123 aa)). Residues histidine 7, glutamate 42, histidine 74, and glutamate 122 each coordinate a divalent metal cation.

This sequence belongs to the glyoxalase I family.

This is an uncharacterized protein from Bacillus subtilis (strain 168).